A 454-amino-acid polypeptide reads, in one-letter code: uncharacterized protein (454 aa).

The first 18 residues, 1-18, serve as a signal peptide directing secretion; that stretch reads MRRFTLFVFFLSISIAYA.

This is an uncharacterized protein from Caenorhabditis elegans.